A 377-amino-acid chain; its full sequence is Galactoside alpha-(1,2)-fucosyltransferase 1 (377 aa).

At 1 to 8 (MWTPSRRQ) the chain is on the cytoplasmic side. A helical; Signal-anchor for type II membrane protein transmembrane segment spans residues 9–26 (LCLAFLLVCVLSAGSFFF). Topologically, residues 27-377 (HLNGGNFFRN…WKPDSLFRLV (351 aa)) are lumenal. Residues asparagine 67, asparagine 303, and asparagine 329 are each glycosylated (N-linked (GlcNAc...) asparagine).

It belongs to the glycosyltransferase 11 family. In terms of tissue distribution, in the adult, highly expressed in pancreas, testis and epididymis and to a lesser extent in thymus, lung, stomach, small intestine, colon, spleen and uterus. Not expressed in brain, heart, skeletal muscle, kidney, liver and bone marrow. Expressed in epididymis and testis.

Its subcellular location is the golgi apparatus. It localises to the golgi stack membrane. It carries out the reaction a beta-D-galactosyl-(1-&gt;4)-N-acetyl-beta-D-glucosaminyl derivative + GDP-beta-L-fucose = an alpha-L-Fuc-(1-&gt;2)-beta-D-Gal-(1-&gt;4)-beta-D-GlcNAc derivative + GDP + H(+). It catalyses the reaction a ganglioside GA1 + GDP-beta-L-fucose = a ganglioside Fuc-GA1 + GDP + H(+). The enzyme catalyses a beta-D-Gal-(1-&gt;3)-beta-D-GlcNAc-(1-&gt;3)-beta-D-Gal-(1-&gt;4)-beta-D-Glc-(1&lt;-&gt;1')-Cer(d18:1(4E)) + GDP-beta-L-fucose = alpha-L-fucosyl-(1-&gt;2)- beta-D-galactosyl-(1-&gt;3)-N-acetyl-beta-D-glucosaminyl-(1-&gt;3)-beta-D-galactosyl-(1-&gt;4)-beta-D-glucosyl-(1&lt;-&gt;1')-N-acylsphing-4-enine + GDP + H(+). The catalysed reaction is a neolactoside nLc4Cer(d18:1(4E)) + GDP-beta-L-fucose = a neolactoside IV(2)-alpha-Fuc-nLc4Cer(d18:1(4E)) + GDP + H(+). It carries out the reaction a ganglioside GM1 + GDP-beta-L-fucose = a ganglioside Fuc-GM1 + GDP + H(+). It catalyses the reaction beta-D-galactosyl-(1-&gt;3)-N-acetyl-D-galactosamine + GDP-beta-L-fucose = alpha-L-fucosyl-(1-&gt;2)-beta-D-galactosyl-(1-&gt;3)-N-acetyl-D-galactosamine + GDP + H(+). It functions in the pathway protein modification; protein glycosylation. Catalyzes the transfer of L-fucose, from a guanosine diphosphate-beta-L-fucose, to the terminal galactose residue of glycoconjugates through an alpha(1,2) linkage leading to H antigen synthesis that is an intermediate substrate in the synthesis of ABO blood group antigens. H antigen is essential for maturation of the glomerular layer of the main olfactory bulb, in cell migration and early cell-cell contacts during tumor associated angiogenesis. Preferentially fucosylates soluble lactose and to a lesser extent, fucosylates glycolipids gangliosides GA1 and GM1a. The sequence is that of Galactoside alpha-(1,2)-fucosyltransferase 1 from Mus musculus (Mouse).